The sequence spans 694 residues: MSTPFGLDFGNDNSVLAVARNRGIDIVVNEVSNRSTPSMVGFGQKNRFLGESAKTKQTSNIKNTVGNLKRILGLDYDHPDFQEESKFFTSKLVKLEDGKIGTQVRFAGESTTFSATQLNAMFINKVKQTVETETKANITDVCIAVPTWYTEEQRYAAADAARIAGLNPVRIVNDITAAGVSYGVFKTDLPEGEEKPRIVAFIDIGHSSYTCSIMAFKKGELKVLGTAWDKNFGGRNFDRAITEHFADEFKTKYKIDIRENPKAYNRVMTSAERLKKVLSANTAAPFSVENVMNDVDASSQLSREELEELVKPMLERVTEPVTKALAQAGLTKDDVDFVEIIGGTTRIPTLKNSISEAFGKPLSTTLNQDEAIAKGAAFICAIHSPTLRVRPFKFEDIHQFSVSYKWDKQVEDEDHLEVFPANSNFPSTKLITLHRSGDFSMEANYTNKEELPPHLDANIAKWDITGVQIPEGETSVPVKLKLRCDPSGLHIIEEAYSLEDIVVKEEVPLPEDAPEDAVPEVKEVTKTVKKDTLEITAHTFTLADDKLNTLIEKENDMTAQDRLVAETEDRKNNLEEYIYTLRGKLDEEYSDFASDAEKTKLKDMLAKAEEWLYEDGFDTIKAKYIAKYEELAAIGNVIRGRYLAKEEEKKQALRAKQEAANLAALSEKLAAQRSADSEAKKDATPEGDAQMDLD.

Residues 671 to 694 are disordered; the sequence is AQRSADSEAKKDATPEGDAQMDLD. Positions 675–684 are enriched in basic and acidic residues; the sequence is ADSEAKKDAT.

Belongs to the heat shock protein 70 family.

The protein resides in the cytoplasm. The polypeptide is Heat shock protein homolog SSE1 (SSE1) (Candida glabrata (strain ATCC 2001 / BCRC 20586 / JCM 3761 / NBRC 0622 / NRRL Y-65 / CBS 138) (Yeast)).